We begin with the raw amino-acid sequence, 167 residues long: Large ribosomal subunit protein bL9 (167 aa).

The protein belongs to the bacterial ribosomal protein bL9 family.

Binds to the 23S rRNA. The chain is Large ribosomal subunit protein bL9 from Nitratidesulfovibrio vulgaris (strain ATCC 29579 / DSM 644 / CCUG 34227 / NCIMB 8303 / VKM B-1760 / Hildenborough) (Desulfovibrio vulgaris).